A 230-amino-acid chain; its full sequence is uncharacterized protein (230 aa).

2 disordered regions span residues T63 to I90 and K194 to H230. The segment covering K194–N217 has biased composition (basic and acidic residues).

This is an uncharacterized protein from Caenorhabditis elegans.